A 261-amino-acid polypeptide reads, in one-letter code: Cytochrome c oxidase subunit 3 (261 aa).

The Mitochondrial matrix segment spans residues 1–15; sequence MTHQTHAYHMVNPSP. The chain crosses the membrane as a helical span at residues 16–34; it reads WPLTGAMSALLLTSGLIMW. Over 35-40 the chain is Mitochondrial intermembrane; it reads FHFNSY. The chain crosses the membrane as a helical span at residues 41-66; the sequence is TLLLLGLLTNLISSYQWWRDIVREGT. The Mitochondrial matrix portion of the chain corresponds to 67 to 72; that stretch reads YQGHHT. The helical transmembrane segment at 73-105 threads the bilayer; it reads KIVQKGLRYGMILFIISEVFFFLGFFWAFYHSS. The Mitochondrial intermembrane segment spans residues 106–128; it reads LAPTPELGGCWPPTGISPLNPLE. The chain crosses the membrane as a helical span at residues 129–152; the sequence is VPLLNTSILLASGVSITWAHHSLM. Topologically, residues 153–155 are mitochondrial matrix; sequence EGN. Residues 156–183 form a helical membrane-spanning segment; the sequence is RKQMLQALTITIALGLYFTALQAMEYYE. Topologically, residues 184–190 are mitochondrial intermembrane; the sequence is ASFTISD. The chain crosses the membrane as a helical span at residues 191-223; sequence GVYGSTFFVATGFHGLHVIIGTTFLITCLVRQT. Residues 224–232 lie on the Mitochondrial matrix side of the membrane; that stretch reads LYHFTSNHH. A helical transmembrane segment spans residues 233 to 256; the sequence is FGFEAAAWYWHFVDVVWLFLYVSI. The Mitochondrial intermembrane portion of the chain corresponds to 257–261; it reads YWWGS.

This sequence belongs to the cytochrome c oxidase subunit 3 family. Component of the cytochrome c oxidase (complex IV, CIV), a multisubunit enzyme composed of 14 subunits. The complex is composed of a catalytic core of 3 subunits MT-CO1, MT-CO2 and MT-CO3, encoded in the mitochondrial DNA, and 11 supernumerary subunits COX4I, COX5A, COX5B, COX6A, COX6B, COX6C, COX7A, COX7B, COX7C, COX8 and NDUFA4, which are encoded in the nuclear genome. The complex exists as a monomer or a dimer and forms supercomplexes (SCs) in the inner mitochondrial membrane with NADH-ubiquinone oxidoreductase (complex I, CI) and ubiquinol-cytochrome c oxidoreductase (cytochrome b-c1 complex, complex III, CIII), resulting in different assemblies (supercomplex SCI(1)III(2)IV(1) and megacomplex MCI(2)III(2)IV(2)).

Its subcellular location is the mitochondrion inner membrane. It carries out the reaction 4 Fe(II)-[cytochrome c] + O2 + 8 H(+)(in) = 4 Fe(III)-[cytochrome c] + 2 H2O + 4 H(+)(out). Functionally, component of the cytochrome c oxidase, the last enzyme in the mitochondrial electron transport chain which drives oxidative phosphorylation. The respiratory chain contains 3 multisubunit complexes succinate dehydrogenase (complex II, CII), ubiquinol-cytochrome c oxidoreductase (cytochrome b-c1 complex, complex III, CIII) and cytochrome c oxidase (complex IV, CIV), that cooperate to transfer electrons derived from NADH and succinate to molecular oxygen, creating an electrochemical gradient over the inner membrane that drives transmembrane transport and the ATP synthase. Cytochrome c oxidase is the component of the respiratory chain that catalyzes the reduction of oxygen to water. Electrons originating from reduced cytochrome c in the intermembrane space (IMS) are transferred via the dinuclear copper A center (CU(A)) of subunit 2 and heme A of subunit 1 to the active site in subunit 1, a binuclear center (BNC) formed by heme A3 and copper B (CU(B)). The BNC reduces molecular oxygen to 2 water molecules using 4 electrons from cytochrome c in the IMS and 4 protons from the mitochondrial matrix. This Ornithorhynchus anatinus (Duckbill platypus) protein is Cytochrome c oxidase subunit 3 (MT-CO3).